We begin with the raw amino-acid sequence, 153 residues long: Holo-[acyl-carrier-protein] synthase (153 aa).

Asp24 and Glu78 together coordinate Mg(2+).

The protein belongs to the P-Pant transferase superfamily. AcpS family. It depends on Mg(2+) as a cofactor.

It localises to the cytoplasm. It carries out the reaction apo-[ACP] + CoA = holo-[ACP] + adenosine 3',5'-bisphosphate + H(+). Transfers the 4'-phosphopantetheine moiety from coenzyme A to a Ser of acyl-carrier-protein. The protein is Holo-[acyl-carrier-protein] synthase of Bordetella pertussis (strain Tohama I / ATCC BAA-589 / NCTC 13251).